The chain runs to 384 residues: Galactokinase (384 aa).

A substrate-binding site is contributed by 34–37 (EHTD). An ATP-binding site is contributed by 123–129 (SSGLSSS). Residues serine 129 and glutamate 161 each coordinate Mg(2+). The Proton acceptor role is filled by aspartate 173. Tyrosine 222 is a binding site for substrate.

This sequence belongs to the GHMP kinase family. GalK subfamily.

The protein resides in the cytoplasm. It catalyses the reaction alpha-D-galactose + ATP = alpha-D-galactose 1-phosphate + ADP + H(+). Its pathway is carbohydrate metabolism; galactose metabolism. Functionally, catalyzes the transfer of the gamma-phosphate of ATP to D-galactose to form alpha-D-galactose-1-phosphate (Gal-1-P). This is Galactokinase from Actinobacillus pleuropneumoniae serotype 5b (strain L20).